Here is a 341-residue protein sequence, read N- to C-terminus: B3 domain-containing transcription factor VRN1 (341 aa).

The TF-B3 1 DNA-binding region spans 5-98 (FFHKLIFSST…AFSVYIFNLS (94 aa)). Residues 166-223 (GPVKAEEPTPTPKIPKKRGRKKKNADPEEINSSAPRDDDPENRSKFYESASARKRTVT) form a disordered region. A compositionally biased stretch (basic residues) spans 179–188 (IPKKRGRKKK). Residues 200-211 (PRDDDPENRSKF) show a composition bias toward basic and acidic residues. Residues 244–338 (FRVVLRPSYL…VLKVTAFRVN (95 aa)) constitute a DNA-binding region (TF-B3 2).

In terms of tissue distribution, expressed in roots and at lower levels in aerial parts.

The protein resides in the nucleus. Essential protein. Involved in the regulation of vernalization. Acts as a transcriptional repressor of FLC, a major target of the vernalization pathway. Binds DNA in vitro in a non-sequence-specific manner. This Arabidopsis thaliana (Mouse-ear cress) protein is B3 domain-containing transcription factor VRN1.